A 268-amino-acid chain; its full sequence is Cytochrome b-c1 complex subunit Rieske-5, mitochondrial (268 aa).

The N-terminal 56 residues, 1 to 56 (MLRIAGRKLSSSAAARSSSAFFTRNPFTFTDDSSSPTRSPSPTSLASQFLDQFRGF), are a transit peptide targeting the mitochondrion. The Mitochondrial matrix portion of the chain corresponds to 57-105 (SSNSVSPAHQTGLVSDLPATVAAIKNPSSKIVYDDSNHERYPPGDPSKR). A helical transmembrane segment spans residues 106–128 (AFAYFVLTGGRFVYASLVRLLIL). The Mitochondrial intermembrane portion of the chain corresponds to 129-268 (KFVLSMSASK…FMEENKLLIG (140 aa)). Residues 178-266 (INLANSVDLG…YSFMEENKLL (89 aa)) form the Rieske domain. [2Fe-2S] cluster is bound by residues Cys211, His213, Cys230, and His233. A disulfide bridge links Cys216 with Cys232.

This sequence belongs to the Rieske iron-sulfur protein family. Component of the ubiquinol-cytochrome c oxidoreductase (cytochrome b-c1 complex, complex III, CIII), a multisubunit enzyme composed of 3 respiratory subunits cytochrome b, cytochrome c1 and Rieske protein, 2 core protein subunits, and several low-molecular weight protein subunits. The complex exists as an obligatory dimer and forms supercomplexes (SCs) in the inner mitochondrial membrane with cytochrome c oxidase (complex IV, CIV). Requires [2Fe-2S] cluster as cofactor. As to expression, high levels are seen in the flowers while a low level expression is seen in the roots, leaves and stems.

Its subcellular location is the mitochondrion inner membrane. The enzyme catalyses a quinol + 2 Fe(III)-[cytochrome c](out) = a quinone + 2 Fe(II)-[cytochrome c](out) + 2 H(+)(out). Functionally, component of the ubiquinol-cytochrome c oxidoreductase, a multisubunit transmembrane complex that is part of the mitochondrial electron transport chain which drives oxidative phosphorylation. The respiratory chain contains 3 multisubunit complexes succinate dehydrogenase (complex II, CII), ubiquinol-cytochrome c oxidoreductase (cytochrome b-c1 complex, complex III, CIII) and cytochrome c oxidase (complex IV, CIV), that cooperate to transfer electrons derived from NADH and succinate to molecular oxygen, creating an electrochemical gradient over the inner membrane that drives transmembrane transport and the ATP synthase. The cytochrome b-c1 complex catalyzes electron transfer from ubiquinol to cytochrome c, linking this redox reaction to translocation of protons across the mitochondrial inner membrane, with protons being carried across the membrane as hydrogens on the quinol. In the process called Q cycle, 2 protons are consumed from the matrix, 4 protons are released into the intermembrane space and 2 electrons are passed to cytochrome c. The Rieske protein is a catalytic core subunit containing a [2Fe-2S] iron-sulfur cluster. It cycles between 2 conformational states during catalysis to transfer electrons from the quinol bound in the Q(0) site in cytochrome b to cytochrome c1. This Nicotiana tabacum (Common tobacco) protein is Cytochrome b-c1 complex subunit Rieske-5, mitochondrial.